Reading from the N-terminus, the 514-residue chain is ATP synthase subunit alpha (514 aa).

Gly-170–Thr-177 is an ATP binding site.

The protein belongs to the ATPase alpha/beta chains family. F-type ATPases have 2 components, CF(1) - the catalytic core - and CF(0) - the membrane proton channel. CF(1) has five subunits: alpha(3), beta(3), gamma(1), delta(1), epsilon(1). CF(0) has three main subunits: a(1), b(2) and c(9-12). The alpha and beta chains form an alternating ring which encloses part of the gamma chain. CF(1) is attached to CF(0) by a central stalk formed by the gamma and epsilon chains, while a peripheral stalk is formed by the delta and b chains.

It localises to the cell inner membrane. The enzyme catalyses ATP + H2O + 4 H(+)(in) = ADP + phosphate + 5 H(+)(out). Produces ATP from ADP in the presence of a proton gradient across the membrane. The alpha chain is a regulatory subunit. The chain is ATP synthase subunit alpha from Pseudomonas fluorescens (strain Pf0-1).